The following is a 228-amino-acid chain: Archaeal flagellar ATP-binding protein FlaH (228 aa).

ATP contacts are provided by Gly30, Thr31, Lys33, Ser34, Val35, Glu57, and Lys191. Mg(2+) is bound at residue Ser34. Glu57 contacts Mg(2+).

This sequence belongs to the FlaH family. The S.acidocaldarius archaellum assembly machinery and its filament consist of seven proteins (FlaB, FlaF, FlaG, FlaH, FlaI, FlaJ and FlaX). Interacts directly with the FlaX ring and the motor ATPase FlaI. Monomers, which can probably form homohexamers upon binding to ATP. In vitro, FlaH assembles as a second ring inside the FlaX ring.

Its subcellular location is the archaeal flagellum. It localises to the cytoplasm. Functionally, component of the archaellum. FlaX, FlaH and FlaI form the core cytoplasmic motor complex of the crenarchaeal archaellum. FlaH binds ATP with high affinity but lacks detectable in vitro ATPase activity. ATP binding is essential for interaction with FlaI and for archaellum assembly. The polypeptide is Archaeal flagellar ATP-binding protein FlaH (Sulfolobus acidocaldarius (strain ATCC 33909 / DSM 639 / JCM 8929 / NBRC 15157 / NCIMB 11770)).